Consider the following 383-residue polypeptide: MKNKLPPFIEIYRALIATPSISATEEALDQSNADLITLLADWFKDLGFNVEVQPVPGTRNKFNMLASIGQGAGGLLLAGHTDTVPFDDGRWTRDPFTLTEHDGKLYGLGTADMKGFFAFILDALRDVDVTKLKKPLYILATADEETSMAGARYFAETTALRPDCAIIGEPTSLQPVRAHKGHISNAIRIQGQSGHSSDPARGVNAIELMHDAIGHILQLRDNLKERYHYEAFTVPYPTLNLGHIHGGDASNRICACCELHMDIRPLPGMTLNELNGLLNDALAPVSERWPGRLTVDELHPPIPGYECPPNHQLVEVVEKLLGAKTEVVNYCTEAPFIQTLCPTLVLGPGSINQAHQPDEYLETRFIKPTRELIIQVIHHFCWH.

Histidine 80 provides a ligand contact to Zn(2+). Residue aspartate 82 is part of the active site. Residue aspartate 112 participates in Zn(2+) binding. The active site involves glutamate 144. Zn(2+) is bound by residues glutamate 145, glutamate 169, and histidine 355.

This sequence belongs to the peptidase M20A family. ArgE subfamily. Homodimer. Zn(2+) is required as a cofactor. Requires Co(2+) as cofactor. The cofactor is glutathione.

The protein localises to the cytoplasm. It catalyses the reaction N(2)-acetyl-L-ornithine + H2O = L-ornithine + acetate. It functions in the pathway amino-acid biosynthesis; L-arginine biosynthesis; L-ornithine from N(2)-acetyl-L-ornithine (linear): step 1/1. In terms of biological role, catalyzes the hydrolysis of the amide bond of N(2)-acetylated L-amino acids. Cleaves the acetyl group from N-acetyl-L-ornithine to form L-ornithine, an intermediate in L-arginine biosynthesis pathway, and a branchpoint in the synthesis of polyamines. In Escherichia coli O9:H4 (strain HS), this protein is Acetylornithine deacetylase.